Here is a 104-residue protein sequence, read N- to C-terminus: Large ribosomal subunit protein bL21c (104 aa).

This sequence belongs to the bacterial ribosomal protein bL21 family. Part of the 50S ribosomal subunit.

The protein localises to the plastid. The protein resides in the chloroplast. In terms of biological role, this protein binds to 23S rRNA. This chain is Large ribosomal subunit protein bL21c, found in Porphyra purpurea (Red seaweed).